Reading from the N-terminus, the 213-residue chain is tRNA (guanine-N(7)-)-methyltransferase (213 aa).

The S-adenosyl-L-methionine site is built by Asp44, Glu69, Asn96, and Asp119. Asp119 is a catalytic residue. Residues Lys123 and Asp155 each coordinate substrate.

It belongs to the class I-like SAM-binding methyltransferase superfamily. TrmB family.

The catalysed reaction is guanosine(46) in tRNA + S-adenosyl-L-methionine = N(7)-methylguanosine(46) in tRNA + S-adenosyl-L-homocysteine. It functions in the pathway tRNA modification; N(7)-methylguanine-tRNA biosynthesis. In terms of biological role, catalyzes the formation of N(7)-methylguanine at position 46 (m7G46) in tRNA. In Thermosynechococcus vestitus (strain NIES-2133 / IAM M-273 / BP-1), this protein is tRNA (guanine-N(7)-)-methyltransferase.